We begin with the raw amino-acid sequence, 221 residues long: MDSSSKPMNGSAGGSPVGDERKMGDHEHEFRISIILLRSFLLVLVIISEALMVTDRETGSVPLPFFGLPRPVFVTKTAKYELVTGLKFYVDALGVVIGYTVLHLLFNIGLVATKGTVVDCKSVAWISFIADSMMGYLLLSSAAVATEIGYLAEEGAPAVLWRKVCNAFGYFCTVYAISVVICFIAALVSFVVVGISAYHLFRLYGIQQQAAREKEKLSAEM.

Residues 1–22 (MDSSSKPMNGSAGGSPVGDERK) are disordered. At 1–31 (MDSSSKPMNGSAGGSPVGDERKMGDHEHEFR) the chain is on the cytoplasmic side. A helical membrane pass occupies residues 32-52 (ISIILLRSFLLVLVIISEALM). Topologically, residues 53–91 (VTDRETGSVPLPFFGLPRPVFVTKTAKYELVTGLKFYVD) are extracellular. A helical membrane pass occupies residues 92–112 (ALGVVIGYTVLHLLFNIGLVA). The Cytoplasmic segment spans residues 113–122 (TKGTVVDCKS). A helical transmembrane segment spans residues 123–143 (VAWISFIADSMMGYLLLSSAA). Over 144–174 (VATEIGYLAEEGAPAVLWRKVCNAFGYFCTV) the chain is Extracellular. Residues 175-195 (YAISVVICFIAALVSFVVVGI) form a helical membrane-spanning segment. Residues 196 to 221 (SAYHLFRLYGIQQQAAREKEKLSAEM) lie on the Cytoplasmic side of the membrane.

This sequence belongs to the Casparian strip membrane proteins (CASP) family. Homodimer and heterodimers.

The protein localises to the cell membrane. The protein is CASP-like protein 2U10 of Selaginella moellendorffii (Spikemoss).